A 185-amino-acid chain; its full sequence is Crossover junction endodeoxyribonuclease RuvC (185 aa).

Residues D7, E68, and D141 contribute to the active site. The Mg(2+) site is built by D7, E68, and D141.

The protein belongs to the RuvC family. In terms of assembly, homodimer which binds Holliday junction (HJ) DNA. The HJ becomes 2-fold symmetrical on binding to RuvC with unstacked arms; it has a different conformation from HJ DNA in complex with RuvA. In the full resolvosome a probable DNA-RuvA(4)-RuvB(12)-RuvC(2) complex forms which resolves the HJ. Mg(2+) serves as cofactor.

The protein resides in the cytoplasm. The enzyme catalyses Endonucleolytic cleavage at a junction such as a reciprocal single-stranded crossover between two homologous DNA duplexes (Holliday junction).. The RuvA-RuvB-RuvC complex processes Holliday junction (HJ) DNA during genetic recombination and DNA repair. Endonuclease that resolves HJ intermediates. Cleaves cruciform DNA by making single-stranded nicks across the HJ at symmetrical positions within the homologous arms, yielding a 5'-phosphate and a 3'-hydroxyl group; requires a central core of homology in the junction. The consensus cleavage sequence is 5'-(A/T)TT(C/G)-3'. Cleavage occurs on the 3'-side of the TT dinucleotide at the point of strand exchange. HJ branch migration catalyzed by RuvA-RuvB allows RuvC to scan DNA until it finds its consensus sequence, where it cleaves and resolves the cruciform DNA. The protein is Crossover junction endodeoxyribonuclease RuvC of Helicobacter hepaticus (strain ATCC 51449 / 3B1).